The primary structure comprises 92 residues: MRLFVFFMLCLLVLLQYHLWFGKNGLGDRHNLQEEVTLILENNSELRQRNQMMFSEIKDLKEGTDAIEERARNELGLVKEGETFFRIVPKED.

At M1 to L3 the chain is on the cytoplasmic side. A helical transmembrane segment spans residues F4–F21. The Periplasmic segment spans residues G22 to D92. Residues D28–E62 are a coiled coil.

Belongs to the FtsB family. In terms of assembly, part of a complex composed of FtsB, FtsL and FtsQ.

The protein localises to the cell inner membrane. Its function is as follows. Essential cell division protein. May link together the upstream cell division proteins, which are predominantly cytoplasmic, with the downstream cell division proteins, which are predominantly periplasmic. The protein is Cell division protein FtsB of Psychromonas ingrahamii (strain DSM 17664 / CCUG 51855 / 37).